We begin with the raw amino-acid sequence, 159 residues long: Mediator of RNA polymerase II transcription subunit 10 (159 aa).

Residues 54–77 (STHTKPQPPSQDDEQKGSANDPLL) form a disordered region.

This sequence belongs to the Mediator complex subunit 10 family. As to quaternary structure, component of the Mediator complex.

It localises to the nucleus. Component of the Mediator complex, a coactivator involved in the regulated transcription of nearly all RNA polymerase II-dependent genes. Mediator functions as a bridge to convey information from gene-specific regulatory proteins to the basal RNA polymerase II transcription machinery. Mediator is recruited to promoters by direct interactions with regulatory proteins and serves as a scaffold for the assembly of a functional preinitiation complex with RNA polymerase II and the general transcription factors. This Aspergillus fumigatus (strain ATCC MYA-4609 / CBS 101355 / FGSC A1100 / Af293) (Neosartorya fumigata) protein is Mediator of RNA polymerase II transcription subunit 10 (nut2).